Consider the following 954-residue polypeptide: MAKVRVHELAKELGITSKDAVTKLQELGEFVRSASSTIEAPVVRKLRNAFPDAANKAAAPAAPKAPAPAAESRPAAPAPGPAAPKAPAPKVEAPAPAAPAASAPAAPQASSAAPAAPSTGAKPGARPGPKAETPAPAPRQGGSSQGSSAPRPGGPRPGNNPFATSQGMPRGRGGDGDRAPRPGNNPFATSQGMPRPGRSDGERPGGPRPAAGAGGPRPGGPRPAPGAGGPRPAAGAGGPRPGAPRPGGPRPTPGMMPNRTERPAPAGAGRPGGGGRGPGRPGAPGTGGPGGGGGAPAGGGFGKGGRGRGGTQGAFGKGGAGRGKQRKSKRAKRQELEQMSAPSLGGVSVPRGDGNTVIRLRRGSSITDFADKIEANPAALVTVLFHLGEMATATQSLDEDTFALLGEELGYKLQVVSPEDEERELLSTFDIDVEAELEAEGDEELEPRAPVVTVMGHVDHGKTRLLDAIRNSDVVAGEHGGITQHIGAYQISHEHEGVERDITFIDTPGHEAFTAMRARGAKVTDIAILVVAADDGVMPQTVEALNHAQAANVPIVVAVNKIDKEGANPDKVKGQLTEYGLVPEEYGGDTMFVEVSARQNLNINELIDAVLLTADAALDLRANPDKAARGIAIEANLDKGRGAVATVLVQSGTLAVGDTIVAGTAHGRVRAMFDEDGQALDVALPSRPVQVLGLSNVPRAGDTFLVTSDERTARQIAEKREAADRNAQLAKRRKRISLEDFDQAVADGKIDTLNLILKGDVSGAVEALEDALLKIDVGEGVQLRVIHRGVGAITQNDVNLATVDSAVIIGFNVKPAERVADLADREGVDMRFYSVIYAAIDDIEAALKGMLKPEYEEFQLGTAEVREVFRSSKFGNIAGSIVRSGIIRRNTKARISRDGKIIGDNLTIETLKRFKDDATEVRTDFECGIGLGSYNDITEGDIIETFEMREKPRV.

The segment covering 56–75 (KAAAPAAPKAPAPAAESRPA) has biased composition (low complexity). The disordered stretch occupies residues 56-355 (KAAAPAAPKA…GVSVPRGDGN (300 aa)). Over residues 76-87 (APAPGPAAPKAP) the composition is skewed to pro residues. 2 stretches are compositionally biased toward low complexity: residues 88 to 125 (APKV…KPGA) and 138 to 151 (PRQG…SAPR). Pro residues predominate over residues 241–254 (PGAPRPGGPRPTPG). A compositionally biased stretch (gly residues) spans 269 to 322 (GRPGGGGRGPGRPGAPGTGGPGGGGGAPAGGGFGKGGRGRGGTQGAFGKGGAGR). The span at 323–332 (GKQRKSKRAK) shows a compositional bias: basic residues. The 172-residue stretch at 447 to 618 (PRAPVVTVMG…AVLLTADAAL (172 aa)) folds into the tr-type G domain. The G1 stretch occupies residues 456-463 (GHVDHGKT). 456–463 (GHVDHGKT) provides a ligand contact to GTP. Positions 481–485 (GITQH) are G2. Residues 506-509 (DTPG) form a G3 region. GTP-binding positions include 506-510 (DTPGH) and 560-563 (NKID). The G4 stretch occupies residues 560 to 563 (NKID). Residues 596-598 (SAR) are G5.

Belongs to the TRAFAC class translation factor GTPase superfamily. Classic translation factor GTPase family. IF-2 subfamily.

The protein localises to the cytoplasm. In terms of biological role, one of the essential components for the initiation of protein synthesis. Protects formylmethionyl-tRNA from spontaneous hydrolysis and promotes its binding to the 30S ribosomal subunits. Also involved in the hydrolysis of GTP during the formation of the 70S ribosomal complex. The protein is Translation initiation factor IF-2 of Pseudarthrobacter chlorophenolicus (strain ATCC 700700 / DSM 12829 / CIP 107037 / JCM 12360 / KCTC 9906 / NCIMB 13794 / A6) (Arthrobacter chlorophenolicus).